The primary structure comprises 126 residues: Hydrogenase maturation factor HypA (126 aa).

Histidine 2 contributes to the Ni(2+) binding site. Residues cysteine 78, cysteine 81, cysteine 97, and cysteine 100 each coordinate Zn(2+).

The protein belongs to the HypA/HybF family.

Its function is as follows. Involved in the maturation of [NiFe] hydrogenases. Required for nickel insertion into the metal center of the hydrogenase. This Methanococcus maripaludis (strain DSM 14266 / JCM 13030 / NBRC 101832 / S2 / LL) protein is Hydrogenase maturation factor HypA.